Reading from the N-terminus, the 124-residue chain is UPF0102 protein Noca_3248 (124 aa).

This sequence belongs to the UPF0102 family.

This is UPF0102 protein Noca_3248 from Nocardioides sp. (strain ATCC BAA-499 / JS614).